The primary structure comprises 334 residues: tRNA dimethylallyltransferase (334 aa).

22–29 (GPTASGKT) provides a ligand contact to ATP. Substrate is bound at residue 24–29 (TASGKT).

The protein belongs to the IPP transferase family. In terms of assembly, monomer. Requires Mg(2+) as cofactor.

The enzyme catalyses adenosine(37) in tRNA + dimethylallyl diphosphate = N(6)-dimethylallyladenosine(37) in tRNA + diphosphate. Functionally, catalyzes the transfer of a dimethylallyl group onto the adenine at position 37 in tRNAs that read codons beginning with uridine, leading to the formation of N6-(dimethylallyl)adenosine (i(6)A). This Rhodopirellula baltica (strain DSM 10527 / NCIMB 13988 / SH1) protein is tRNA dimethylallyltransferase.